The following is a 122-amino-acid chain: Ribonuclease P protein component (122 aa).

It belongs to the RnpA family. As to quaternary structure, consists of a catalytic RNA component (M1 or rnpB) and a protein subunit.

It carries out the reaction Endonucleolytic cleavage of RNA, removing 5'-extranucleotides from tRNA precursor.. In terms of biological role, RNaseP catalyzes the removal of the 5'-leader sequence from pre-tRNA to produce the mature 5'-terminus. It can also cleave other RNA substrates such as 4.5S RNA. The protein component plays an auxiliary but essential role in vivo by binding to the 5'-leader sequence and broadening the substrate specificity of the ribozyme. The polypeptide is Ribonuclease P protein component (Lactobacillus gasseri (strain ATCC 33323 / DSM 20243 / BCRC 14619 / CIP 102991 / JCM 1131 / KCTC 3163 / NCIMB 11718 / NCTC 13722 / AM63)).